We begin with the raw amino-acid sequence, 508 residues long: Anthranilate synthase component 1 (508 aa).

Residues serine 49 and 282 to 284 (PYM) each bind L-tryptophan. Position 317 to 318 (317 to 318 (GT)) interacts with chorismate. Residue glutamate 344 coordinates Mg(2+). Residues tyrosine 432, arginine 452, 466–468 (GAG), and glycine 468 each bind chorismate. Glutamate 481 is a binding site for Mg(2+).

The protein belongs to the anthranilate synthase component I family. Heterotetramer consisting of two non-identical subunits: a beta subunit (TrpG) and a large alpha subunit (TrpE). The cofactor is Mg(2+).

It catalyses the reaction chorismate + L-glutamine = anthranilate + pyruvate + L-glutamate + H(+). Its pathway is amino-acid biosynthesis; L-tryptophan biosynthesis; L-tryptophan from chorismate: step 1/5. Feedback inhibited by tryptophan. Part of a heterotetrameric complex that catalyzes the two-step biosynthesis of anthranilate, an intermediate in the biosynthesis of L-tryptophan. In the first step, the glutamine-binding beta subunit (TrpG) of anthranilate synthase (AS) provides the glutamine amidotransferase activity which generates ammonia as a substrate that, along with chorismate, is used in the second step, catalyzed by the large alpha subunit of AS (TrpE) to produce anthranilate. In the absence of TrpG, TrpE can synthesize anthranilate directly from chorismate and high concentrations of ammonia. This is Anthranilate synthase component 1 (trpE) from Bacillus caldotenax.